We begin with the raw amino-acid sequence, 415 residues long: Transposase for insertion sequence element IS1081 (415 aa).

The protein belongs to the transposase mutator family.

Required for the transposition of the insertion element. In Mycobacterium bovis (strain ATCC BAA-935 / AF2122/97), this protein is Transposase for insertion sequence element IS1081.